The sequence spans 270 residues: tRNA pseudouridine synthase A (270 aa).

Catalysis depends on Asp60, which acts as the Nucleophile. Tyr118 is a binding site for substrate.

The protein belongs to the tRNA pseudouridine synthase TruA family. In terms of assembly, homodimer.

It catalyses the reaction uridine(38/39/40) in tRNA = pseudouridine(38/39/40) in tRNA. In terms of biological role, formation of pseudouridine at positions 38, 39 and 40 in the anticodon stem and loop of transfer RNAs. The protein is tRNA pseudouridine synthase A of Salmonella arizonae (strain ATCC BAA-731 / CDC346-86 / RSK2980).